The primary structure comprises 172 residues: uncharacterized protein (172 aa).

A compositionally biased stretch (low complexity) spans 1–28 (MAAAGVTAKAGGGTSAAAASLIRARSPA). The interval 1 to 172 (MAAAGVTAKA…GGRRSGRDAG (172 aa)) is disordered. Residues 58–68 (PRRRSRARRGH) show a composition bias toward basic residues. The span at 80–100 (TVGGEGQASQIGGGGGGGGGR) shows a compositional bias: gly residues. Residues 129 to 138 (PGLASSPGVA) show a composition bias toward low complexity. The segment covering 139 to 165 (PAGGSGGLWSGAGLCSGLGARGFPGGR) has biased composition (gly residues).

This is an uncharacterized protein from Homo sapiens (Human).